Consider the following 82-residue polypeptide: ATP synthase subunit c, chloroplastic (82 aa).

Helical transmembrane passes span 3 to 23 and 57 to 77; these read PLISAASVLAAGLAVGLASIG and FAFMESLTIYGLVVALALLFA.

It belongs to the ATPase C chain family. In terms of assembly, F-type ATPases have 2 components, F(1) - the catalytic core - and F(0) - the membrane proton channel. F(1) has five subunits: alpha(3), beta(3), gamma(1), delta(1), epsilon(1). F(0) has four main subunits: a(1), b(1), b'(1) and c(10-14). The alpha and beta chains form an alternating ring which encloses part of the gamma chain. F(1) is attached to F(0) by a central stalk formed by the gamma and epsilon chains, while a peripheral stalk is formed by the delta, b and b' chains.

It is found in the plastid. It localises to the chloroplast thylakoid membrane. In terms of biological role, f(1)F(0) ATP synthase produces ATP from ADP in the presence of a proton or sodium gradient. F-type ATPases consist of two structural domains, F(1) containing the extramembraneous catalytic core and F(0) containing the membrane proton channel, linked together by a central stalk and a peripheral stalk. During catalysis, ATP synthesis in the catalytic domain of F(1) is coupled via a rotary mechanism of the central stalk subunits to proton translocation. Key component of the F(0) channel; it plays a direct role in translocation across the membrane. A homomeric c-ring of between 10-14 subunits forms the central stalk rotor element with the F(1) delta and epsilon subunits. In Mesostigma viride (Green alga), this protein is ATP synthase subunit c, chloroplastic.